A 754-amino-acid chain; its full sequence is Elongation factor G-2, mitochondrial (754 aa).

In terms of domain architecture, tr-type G spans 63–340 (DKLRNIGISA…GVVSFLPSPN (278 aa)). GTP contacts are provided by residues 72–79 (AHIDSGKT), 139–143 (DTPGH), and 193–196 (NKLD).

This sequence belongs to the TRAFAC class translation factor GTPase superfamily. Classic translation factor GTPase family. EF-G/EF-2 subfamily. In terms of tissue distribution, expressed in cotyledons and adult leaves at the same levels.

It is found in the mitochondrion. It participates in protein biosynthesis; polypeptide chain elongation. Mitochondrial GTPase that catalyzes the GTP-dependent ribosomal translocation step during translation elongation. During this step, the ribosome changes from the pre-translocational (PRE) to the post-translocational (POST) state as the newly formed A-site-bound peptidyl-tRNA and P-site-bound deacylated tRNA move to the P and E sites, respectively. Catalyzes the coordinated movement of the two tRNA molecules, the mRNA and conformational changes in the ribosome. The chain is Elongation factor G-2, mitochondrial (MEFG2) from Arabidopsis thaliana (Mouse-ear cress).